We begin with the raw amino-acid sequence, 313 residues long: Aspartoacylase (313 aa).

Zn(2+)-binding residues include His21 and Glu24. The N-acetyl-L-aspartate site is built by Arg63, Asn70, and Arg71. His116 contacts Zn(2+). Tyr164 and Arg168 together coordinate N-acetyl-L-aspartate. Residue Glu178 is the Proton donor/acceptor of the active site. N-acetyl-L-aspartate is bound at residue Tyr288.

Belongs to the AspA/AstE family. Aspartoacylase subfamily. In terms of assembly, homodimer. Zn(2+) is required as a cofactor.

The protein localises to the cytoplasm. The protein resides in the nucleus. The catalysed reaction is an N-acyl-L-aspartate + H2O = a carboxylate + L-aspartate. It carries out the reaction N-acetyl-L-aspartate + H2O = L-aspartate + acetate. Its function is as follows. Catalyzes the deacetylation of N-acetylaspartic acid (NAA) to produce acetate and L-aspartate. NAA occurs in high concentration in brain and its hydrolysis NAA plays a significant part in the maintenance of intact white matter. In other tissues it acts as a scavenger of NAA from body fluids. The sequence is that of Aspartoacylase from Pongo abelii (Sumatran orangutan).